The chain runs to 306 residues: Acetyl-coenzyme A carboxylase carboxyl transferase subunit beta (306 aa).

Residues L27–P296 form the CoA carboxyltransferase N-terminal domain. Residues C31, C34, C50, and C53 each contribute to the Zn(2+) site. Residues C31–C53 form a C4-type zinc finger.

The protein belongs to the AccD/PCCB family. As to quaternary structure, acetyl-CoA carboxylase is a heterohexamer composed of biotin carboxyl carrier protein (AccB), biotin carboxylase (AccC) and two subunits each of ACCase subunit alpha (AccA) and ACCase subunit beta (AccD). Requires Zn(2+) as cofactor.

It is found in the cytoplasm. It catalyses the reaction N(6)-carboxybiotinyl-L-lysyl-[protein] + acetyl-CoA = N(6)-biotinyl-L-lysyl-[protein] + malonyl-CoA. It functions in the pathway lipid metabolism; malonyl-CoA biosynthesis; malonyl-CoA from acetyl-CoA: step 1/1. In terms of biological role, component of the acetyl coenzyme A carboxylase (ACC) complex. Biotin carboxylase (BC) catalyzes the carboxylation of biotin on its carrier protein (BCCP) and then the CO(2) group is transferred by the transcarboxylase to acetyl-CoA to form malonyl-CoA. In Pseudomonas fluorescens (strain ATCC BAA-477 / NRRL B-23932 / Pf-5), this protein is Acetyl-coenzyme A carboxylase carboxyl transferase subunit beta.